The following is a 159-amino-acid chain: Transcriptional repressor NrdR (159 aa).

A zinc finger lies at 3–34 (CPFCNAADSKVIDSRLAAEGCQIRRRRECISC). The ATP-cone domain occupies 49 to 139 (PRVIKSNGKN…VYQDFQDVEA (91 aa)).

The protein belongs to the NrdR family. Zn(2+) is required as a cofactor.

Functionally, negatively regulates transcription of bacterial ribonucleotide reductase nrd genes and operons by binding to NrdR-boxes. This chain is Transcriptional repressor NrdR, found in Acinetobacter baylyi (strain ATCC 33305 / BD413 / ADP1).